Reading from the N-terminus, the 332-residue chain is L-lactate dehydrogenase A chain (332 aa).

NAD(+)-binding positions include 29–57 (GAVG…VEDK) and Arg-99. Substrate is bound by residues Arg-106, Asn-138, and Arg-169. Asn-138 lines the NAD(+) pocket. His-193 acts as the Proton acceptor in catalysis. Substrate is bound at residue Thr-248.

Belongs to the LDH/MDH superfamily. LDH family. In terms of assembly, homotetramer.

The protein localises to the cytoplasm. It catalyses the reaction (S)-lactate + NAD(+) = pyruvate + NADH + H(+). Its pathway is fermentation; pyruvate fermentation to lactate; (S)-lactate from pyruvate: step 1/1. Interconverts simultaneously and stereospecifically pyruvate and lactate with concomitant interconversion of NADH and NAD(+). The sequence is that of L-lactate dehydrogenase A chain (LDHA) from Columba livia (Rock dove).